A 374-amino-acid polypeptide reads, in one-letter code: RNA polymerase sigma factor SigA (374 aa).

The segment at 141–211 is sigma-70 factor domain-2; that stretch reads LAEANLRLVV…TRAIADQART (71 aa). Residues 165 to 168 carry the Interaction with polymerase core subunit RpoC motif; it reads DLIQ. A sigma-70 factor domain-3 region spans residues 220–296; it reads ETINKLIRVQ…DQDATSPSDH (77 aa). Positions 309–362 are sigma-70 factor domain-4; the sequence is VLDTLTDREENVLRLRFGLDDGRTRTLEEVGRVFGVTRERIRQIEAKALRKLRH. A DNA-binding region (H-T-H motif) is located at residues 335–354; that stretch reads LEEVGRVFGVTRERIRQIEA.

It belongs to the sigma-70 factor family. RpoD/SigA subfamily. Interacts transiently with the RNA polymerase catalytic core.

The protein resides in the cytoplasm. In terms of biological role, sigma factors are initiation factors that promote the attachment of RNA polymerase to specific initiation sites and are then released. This sigma factor is the primary sigma factor during exponential growth. The chain is RNA polymerase sigma factor SigA from Listeria monocytogenes serovar 1/2a (strain ATCC BAA-679 / EGD-e).